The following is an 84-amino-acid chain: Small ribosomal subunit protein bS16 (84 aa).

The protein belongs to the bacterial ribosomal protein bS16 family.

This is Small ribosomal subunit protein bS16 from Dechloromonas aromatica (strain RCB).